The following is a 127-amino-acid chain: Probable glycine cleavage system H protein (127 aa).

A Lipoyl-binding domain is found at 24–106 (TAEVGITAFA…FGDGWMLTVE (83 aa)). K65 is modified (N6-lipoyllysine).

This sequence belongs to the GcvH family. The glycine cleavage system is composed of four proteins: P, T, L and H. (R)-lipoate serves as cofactor.

Its function is as follows. The glycine cleavage system catalyzes the degradation of glycine. The H protein shuttles the methylamine group of glycine from the P protein to the T protein. This chain is Probable glycine cleavage system H protein, found in Haloarcula marismortui (strain ATCC 43049 / DSM 3752 / JCM 8966 / VKM B-1809) (Halobacterium marismortui).